Here is an 80-residue protein sequence, read N- to C-terminus: Defensin-like protein 2 (80 aa).

A signal peptide spans 1–29; that stretch reads MAKFASIIVLLFVALVVFAAFEEPTMVEA. Pyrrolidone carboxylic acid is present on Gln-30. 4 disulfide bridges follow: Cys-33–Cys-80, Cys-44–Cys-65, Cys-50–Cys-74, and Cys-54–Cys-76.

It belongs to the DEFL family.

The protein resides in the secreted. In terms of biological role, possesses antifungal activity sensitive to inorganic cations. Induces potential changes in fungal membranes and increased K(+) efflux and Ca(2+) uptake. In Raphanus sativus (Radish), this protein is Defensin-like protein 2 (AFP2).